The primary structure comprises 599 residues: Vitamin B12-dependent ribonucleotide reductase (599 aa).

Position 193 to 197 (193 to 197) interacts with substrate; it reads PTGTI. Residues 519–555 are disordered; it reads LAQSAPRQAGPAKAATTAPAAKAQEPAAAPSPKQAHN. A compositionally biased stretch (low complexity) spans 526–553; sequence QAGPAKAATTAPAAKAQEPAAAPSPKQA.

The protein belongs to the ribonucleoside diphosphate reductase class-2 family. It depends on adenosylcob(III)alamin as a cofactor.

The catalysed reaction is a 2'-deoxyribonucleoside 5'-diphosphate + [thioredoxin]-disulfide + H2O = a ribonucleoside 5'-diphosphate + [thioredoxin]-dithiol. In terms of biological role, catalyzes the reduction of ribonucleotides to deoxyribonucleotides. May function to provide a pool of deoxyribonucleotide precursors for DNA repair during oxygen limitation and/or for immediate growth after restoration of oxygen. The sequence is that of Vitamin B12-dependent ribonucleotide reductase (nrdJ) from Streptantibioticus cattleyicolor (Streptomyces cattleya).